A 234-amino-acid polypeptide reads, in one-letter code: UPF0173 metal-dependent hydrolase R01310 (234 aa).

It belongs to the UPF0173 family.

This Rhizobium meliloti (strain 1021) (Ensifer meliloti) protein is UPF0173 metal-dependent hydrolase R01310.